Reading from the N-terminus, the 90-residue chain is Acylphosphatase (90 aa).

Residues 3–90 (AVHMNASGQV…FEGQDFIVKY (88 aa)) enclose the Acylphosphatase-like domain. Active-site residues include Arg18 and Asn36.

The protein belongs to the acylphosphatase family.

The catalysed reaction is an acyl phosphate + H2O = a carboxylate + phosphate + H(+). The polypeptide is Acylphosphatase (acyP) (Pediococcus pentosaceus (strain ATCC 25745 / CCUG 21536 / LMG 10740 / 183-1w)).